Consider the following 200-residue polypeptide: Putative vacuolar protein sorting-associated protein 24 homolog 2 (200 aa).

The stretch at 2 to 23 (TIKSLLSDIEREERNVHKAIKD) forms a coiled coil.

It belongs to the SNF7 family. In terms of assembly, component of the endosomal sorting required for transport complex III (ESCRT-III), composed at least of VPS2, VPS20, VPS24 and VPS32.

Its subcellular location is the endosome. In terms of biological role, component of the ESCRT-III complex, which is required for multivesicular bodies (MVBs) formation and sorting of endosomal cargo proteins into MVBs. The ESCRT-III complex is probably involved in the concentration of MVB cargo. In Arabidopsis thaliana (Mouse-ear cress), this protein is Putative vacuolar protein sorting-associated protein 24 homolog 2 (VPS24-2).